The chain runs to 207 residues: Outer-membrane lipoprotein LolB (207 aa).

The N-terminal stretch at 1 to 23 (MINLRRFTKFTLAGLTALSLLGG) is a signal peptide. C24 carries N-palmitoyl cysteine lipidation. A lipid anchor (S-diacylglycerol cysteine) is attached at C24.

Belongs to the LolB family. Monomer.

The protein resides in the cell outer membrane. Its function is as follows. Plays a critical role in the incorporation of lipoproteins in the outer membrane after they are released by the LolA protein. In Shewanella amazonensis (strain ATCC BAA-1098 / SB2B), this protein is Outer-membrane lipoprotein LolB.